Consider the following 66-residue polypeptide: Large ribosomal subunit protein bL31 (66 aa).

Zn(2+)-binding residues include cysteine 16, cysteine 18, cysteine 36, and cysteine 39.

The protein belongs to the bacterial ribosomal protein bL31 family. Type A subfamily. Part of the 50S ribosomal subunit. It depends on Zn(2+) as a cofactor.

In terms of biological role, binds the 23S rRNA. The chain is Large ribosomal subunit protein bL31 from Sulfurimonas denitrificans (strain ATCC 33889 / DSM 1251) (Thiomicrospira denitrificans (strain ATCC 33889 / DSM 1251)).